The chain runs to 254 residues: Vitamin B12 import ATP-binding protein BtuD (254 aa).

One can recognise an ABC transporter domain in the interval 1 to 239 (MHINHISVGN…ENLQQVFETP (239 aa)). 29–36 (GPNGSGKS) provides a ligand contact to ATP.

Belongs to the ABC transporter superfamily. Vitamin B12 importer (TC 3.A.1.13.1) family. As to quaternary structure, the complex is composed of two ATP-binding proteins (BtuD), two transmembrane proteins (BtuC) and a solute-binding protein (BtuF).

The protein resides in the cell inner membrane. It catalyses the reaction an R-cob(III)alamin(out) + ATP + H2O = an R-cob(III)alamin(in) + ADP + phosphate + H(+). Its function is as follows. Part of the ABC transporter complex BtuCDF involved in vitamin B12 import. Responsible for energy coupling to the transport system. This chain is Vitamin B12 import ATP-binding protein BtuD, found in Vibrio vulnificus (strain YJ016).